Reading from the N-terminus, the 130-residue chain is Small ribosomal subunit protein uS11 (130 aa).

It belongs to the universal ribosomal protein uS11 family. As to quaternary structure, part of the 30S ribosomal subunit.

Functionally, located on the platform of the 30S subunit. This is Small ribosomal subunit protein uS11 from Nanoarchaeum equitans (strain Kin4-M).